We begin with the raw amino-acid sequence, 95 residues long: Small ribosomal subunit protein bS6 (95 aa).

The protein belongs to the bacterial ribosomal protein bS6 family.

Its function is as follows. Binds together with bS18 to 16S ribosomal RNA. The polypeptide is Small ribosomal subunit protein bS6 (Desulforamulus reducens (strain ATCC BAA-1160 / DSM 100696 / MI-1) (Desulfotomaculum reducens)).